A 677-amino-acid polypeptide reads, in one-letter code: Methionine--tRNA ligase (677 aa).

The 'HIGH' region motif lies at 15–25; the sequence is PYANGSIHLGH. Zn(2+) contacts are provided by Cys-146, Cys-149, Cys-159, and Cys-162. The 'KMSKS' region signature appears at 333 to 337; that stretch reads KMSKS. ATP is bound at residue Lys-336. The 103-residue stretch at 575–677 folds into the tRNA-binding domain; that stretch reads DFAKVDLRVA…AGAKPGHQVK (103 aa).

It belongs to the class-I aminoacyl-tRNA synthetase family. MetG type 1 subfamily. Homodimer. Zn(2+) serves as cofactor.

It is found in the cytoplasm. It catalyses the reaction tRNA(Met) + L-methionine + ATP = L-methionyl-tRNA(Met) + AMP + diphosphate. Its function is as follows. Is required not only for elongation of protein synthesis but also for the initiation of all mRNA translation through initiator tRNA(fMet) aminoacylation. The sequence is that of Methionine--tRNA ligase from Escherichia coli O17:K52:H18 (strain UMN026 / ExPEC).